Consider the following 313-residue polypeptide: Homoserine O-succinyltransferase (313 aa).

Cys142 acts as the Acyl-thioester intermediate in catalysis. Residues Lys163 and Ser192 each coordinate substrate. The active-site Proton acceptor is His235. Glu237 is a catalytic residue. Arg249 contacts substrate.

The protein belongs to the MetA family.

It is found in the cytoplasm. It catalyses the reaction L-homoserine + succinyl-CoA = O-succinyl-L-homoserine + CoA. It functions in the pathway amino-acid biosynthesis; L-methionine biosynthesis via de novo pathway; O-succinyl-L-homoserine from L-homoserine: step 1/1. Its function is as follows. Transfers a succinyl group from succinyl-CoA to L-homoserine, forming succinyl-L-homoserine. This Vibrio parahaemolyticus serotype O3:K6 (strain RIMD 2210633) protein is Homoserine O-succinyltransferase.